Reading from the N-terminus, the 58-residue chain is UPF0391 membrane protein GM21_0108 (58 aa).

Helical transmembrane passes span Trp4 to Ala24 and Val33 to Gly53.

The protein belongs to the UPF0391 family.

The protein localises to the cell membrane. This chain is UPF0391 membrane protein GM21_0108, found in Geobacter sp. (strain M21).